Reading from the N-terminus, the 940-residue chain is UvrABC system protein A (940 aa).

Position 31–38 (31–38) interacts with ATP; that stretch reads GLSGSGKS. A C4-type zinc finger spans residues 252-279; that stretch reads CPHCGYSMRELEPRLFSFNNPAGACPTC. 2 ABC transporter domains span residues 309-586 and 606-936; these read WDQK…PNSL and KDAK…RFLK. 639–646 is a binding site for ATP; the sequence is GVSGSGKS. Residues 739–765 form a C4-type zinc finger; sequence CEACQGDGVIKVEMHFLPDVYVPCDVC.

It belongs to the ABC transporter superfamily. UvrA family. Forms a heterotetramer with UvrB during the search for lesions.

The protein resides in the cytoplasm. Its function is as follows. The UvrABC repair system catalyzes the recognition and processing of DNA lesions. UvrA is an ATPase and a DNA-binding protein. A damage recognition complex composed of 2 UvrA and 2 UvrB subunits scans DNA for abnormalities. When the presence of a lesion has been verified by UvrB, the UvrA molecules dissociate. In Vibrio cholerae serotype O1 (strain ATCC 39315 / El Tor Inaba N16961), this protein is UvrABC system protein A.